The following is a 677-amino-acid chain: MDDTEGNSSMDSIRNGQSSPLPQVTPRLPQIPMMMRETPLSTKRERQAITPRFRRPAPKMIKTMPPTRSIWSVRKESVPLLVTPQGPKPLESPKYDHTNAQSFFEQVFQIDEIIGRGSFGEVFAARCREDSQLYAVKVSLAPIRQHSISKYREAESHMIIPPHKNLVKFYRAWEETGRLYIQTELCDQSLLKYCTEKHALPEDEIWNIFVDLLQAVHHLHSNDMIHDDIKPENIFLTKDMICKLGDFGLVINLKNPNDVKSAEEGDSKYLAPEVLNGRPTKSSDIFSLGMTILEATTDLDVPSNGDSWHQIRNGQIPDRFFAGISTDLRSLIALMLDSDPRIRPTSRDLLDHPVIKKKLMKRGTYVKCISILNGFFYAFSAVLVWVMAFFSVLFHPIVRFHAAIKDRQSEICAQFVNNQQHTPIQTPETSKVYLESLTGVAVRQASQIVSPFDFSDDENPPNAQRRLFTGAVPCRLNFDNDQDDDEEQATCSSSNSSAIEPQLDEPESPPRMNDVIDKLGKRGTPRSARRNLTFNRHRQVAASVAPKSSLNHYNHHTGSGDGFSNNSLIPISDQERTEKYLRMRLTEQQLDWADQNNVIDEAPPPMSCPPRIRRSIRDLPRMPVLNFNVLDEPSNKPTVDHHTILEQSESPRRRLNRGAKPVPRNRMMSFGSSGDEV.

Positions 1 to 22 (MDDTEGNSSMDSIRNGQSSPLP) are enriched in polar residues. The disordered stretch occupies residues 1 to 30 (MDDTEGNSSMDSIRNGQSSPLPQVTPRLPQ). In terms of domain architecture, Protein kinase spans 108–355 (FQIDEIIGRG…SRDLLDHPVI (248 aa)). ATP contacts are provided by residues 114 to 122 (IGRGSFGEV) and K137. D228 acts as the Proton acceptor in catalysis. 2 residues coordinate Mg(2+): N233 and D246. 2 disordered regions span residues 478–526 (FDND…GTPR) and 632–677 (EPSN…GDEV). Residues 489–499 (ATCSSSNSSAI) are compositionally biased toward polar residues. Over residues 638 to 652 (TVDHHTILEQSESPR) the composition is skewed to basic and acidic residues.

This sequence belongs to the protein kinase superfamily. Ser/Thr protein kinase family. WEE1 subfamily.

It is found in the golgi apparatus membrane. The protein localises to the cytoplasm. The catalysed reaction is L-seryl-[protein] + ATP = O-phospho-L-seryl-[protein] + ADP + H(+). It carries out the reaction L-threonyl-[protein] + ATP = O-phospho-L-threonyl-[protein] + ADP + H(+). Its function is as follows. Acts as a negative regulator of entry into mitosis (G2 to M transition) by phosphorylation of the CDK1 kinase during oocyte maturation. Required for oocyte maturation, embryonic development, germline proliferation and initiation of meiosis during spermatogenesis. Required for chromosome structure during mitosis and negative regulation of nuclear envelope breakdown. This is Membrane-associated tyrosine- and threonine-specific cdc2-inhibitory kinase wee-1.3 (wee-1.3) from Caenorhabditis elegans.